The following is a 128-amino-acid chain: Probable 4-amino-4-deoxy-L-arabinose-phosphoundecaprenol flippase subunit ArnF (128 aa).

The Cytoplasmic segment spans residues 1 to 2 (MG). A helical transmembrane segment spans residues 3–23 (LIWGLFSVIIASVAQLSLGFA). Residues 24–35 (ASHLPPMTHLWD) lie on the Periplasmic side of the membrane. A helical membrane pass occupies residues 36–56 (FIAALLAFGLDARILLLGLLG). The Cytoplasmic portion of the chain corresponds to 57-76 (YLLSVFCWYKTLHKLALSKA). A helical membrane pass occupies residues 77-97 (YALLSMSYVLVWIASMVLPGW). The Periplasmic portion of the chain corresponds to 98-100 (EGT). The chain crosses the membrane as a helical span at residues 101 to 121 (FSLKALLGVACIMSGLMLIFL). Topologically, residues 122 to 128 (PTTKQRY) are cytoplasmic.

The protein belongs to the ArnF family. Heterodimer of ArnE and ArnF.

Its subcellular location is the cell inner membrane. It functions in the pathway bacterial outer membrane biogenesis; lipopolysaccharide biosynthesis. Its function is as follows. Translocates 4-amino-4-deoxy-L-arabinose-phosphoundecaprenol (alpha-L-Ara4N-phosphoundecaprenol) from the cytoplasmic to the periplasmic side of the inner membrane. This Shigella boydii serotype 4 (strain Sb227) protein is Probable 4-amino-4-deoxy-L-arabinose-phosphoundecaprenol flippase subunit ArnF.